A 156-amino-acid polypeptide reads, in one-letter code: 6,7-dimethyl-8-ribityllumazine synthase (156 aa).

5-amino-6-(D-ribitylamino)uracil contacts are provided by residues F23, 57–59 (AFE), and 81–83 (AVI). 86–87 (ST) is a (2S)-2-hydroxy-3-oxobutyl phosphate binding site. The active-site Proton donor is the H89. F114 serves as a coordination point for 5-amino-6-(D-ribitylamino)uracil. Residue R128 coordinates (2S)-2-hydroxy-3-oxobutyl phosphate.

Belongs to the DMRL synthase family.

It carries out the reaction (2S)-2-hydroxy-3-oxobutyl phosphate + 5-amino-6-(D-ribitylamino)uracil = 6,7-dimethyl-8-(1-D-ribityl)lumazine + phosphate + 2 H2O + H(+). The protein operates within cofactor biosynthesis; riboflavin biosynthesis; riboflavin from 2-hydroxy-3-oxobutyl phosphate and 5-amino-6-(D-ribitylamino)uracil: step 1/2. In terms of biological role, catalyzes the formation of 6,7-dimethyl-8-ribityllumazine by condensation of 5-amino-6-(D-ribitylamino)uracil with 3,4-dihydroxy-2-butanone 4-phosphate. This is the penultimate step in the biosynthesis of riboflavin. This is 6,7-dimethyl-8-ribityllumazine synthase from Campylobacter fetus subsp. fetus (strain 82-40).